The sequence spans 62 residues: Large ribosomal subunit protein bL28 (62 aa).

This sequence belongs to the bacterial ribosomal protein bL28 family.

In Thermoanaerobacter pseudethanolicus (strain ATCC 33223 / 39E) (Clostridium thermohydrosulfuricum), this protein is Large ribosomal subunit protein bL28.